Reading from the N-terminus, the 377-residue chain is Anhydro-N-acetylmuramic acid kinase (377 aa).

12-19 is a binding site for ATP; that stretch reads GTSLDGID.

This sequence belongs to the anhydro-N-acetylmuramic acid kinase family.

The catalysed reaction is 1,6-anhydro-N-acetyl-beta-muramate + ATP + H2O = N-acetyl-D-muramate 6-phosphate + ADP + H(+). It participates in amino-sugar metabolism; 1,6-anhydro-N-acetylmuramate degradation. The protein operates within cell wall biogenesis; peptidoglycan recycling. Catalyzes the specific phosphorylation of 1,6-anhydro-N-acetylmuramic acid (anhMurNAc) with the simultaneous cleavage of the 1,6-anhydro ring, generating MurNAc-6-P. Is required for the utilization of anhMurNAc either imported from the medium or derived from its own cell wall murein, and thus plays a role in cell wall recycling. This Methylorubrum populi (strain ATCC BAA-705 / NCIMB 13946 / BJ001) (Methylobacterium populi) protein is Anhydro-N-acetylmuramic acid kinase.